A 220-amino-acid polypeptide reads, in one-letter code: Protein CREG1 (220 aa).

Positions 1-31 are cleaved as a signal peptide; it reads MAGLSRGSARALLAALLASTLLALLVSPARG. Asparagine 160, asparagine 193, and asparagine 216 each carry an N-linked (GlcNAc...) asparagine glycan.

It belongs to the CREG family. Homodimer. Interacts with IGF2R; the interaction is dependent on glycosylation. In terms of processing, N-glycosylated.

It localises to the secreted. Functionally, may contribute to the transcriptional control of cell growth and differentiation. Antagonizes transcriptional activation and cellular transformation by the adenovirus E1A protein. The transcriptional control activity of cell growth requires interaction with IGF2R. The protein is Protein CREG1 (CREG1) of Homo sapiens (Human).